The chain runs to 87 residues: Small ribosomal subunit protein bS20 (87 aa).

Residues 1 to 23 are disordered; the sequence is MANHKSAIKRHKQSVKRAARNRA.

The protein belongs to the bacterial ribosomal protein bS20 family.

Binds directly to 16S ribosomal RNA. The chain is Small ribosomal subunit protein bS20 from Oleidesulfovibrio alaskensis (strain ATCC BAA-1058 / DSM 17464 / G20) (Desulfovibrio alaskensis).